The primary structure comprises 156 residues: Endoribonuclease YbeY (156 aa).

Residues H122, H126, and H132 each contribute to the Zn(2+) site.

It belongs to the endoribonuclease YbeY family. Zn(2+) serves as cofactor.

The protein localises to the cytoplasm. Functionally, single strand-specific metallo-endoribonuclease involved in late-stage 70S ribosome quality control and in maturation of the 3' terminus of the 16S rRNA. The chain is Endoribonuclease YbeY from Bacillus cereus (strain ATCC 14579 / DSM 31 / CCUG 7414 / JCM 2152 / NBRC 15305 / NCIMB 9373 / NCTC 2599 / NRRL B-3711).